We begin with the raw amino-acid sequence, 245 residues long: Uridylate kinase (245 aa).

ATP is bound at residue Lys-18–Gly-21. Gly-60 lines the UMP pocket. Residues Gly-61 and Arg-65 each contribute to the ATP site. Residues Asp-80 and Thr-141–Thr-148 contribute to the UMP site. Thr-168, Tyr-174, and Asp-177 together coordinate ATP.

It belongs to the UMP kinase family. In terms of assembly, homohexamer.

It localises to the cytoplasm. The catalysed reaction is UMP + ATP = UDP + ADP. Its pathway is pyrimidine metabolism; CTP biosynthesis via de novo pathway; UDP from UMP (UMPK route): step 1/1. Inhibited by UTP. Its function is as follows. Catalyzes the reversible phosphorylation of UMP to UDP. The chain is Uridylate kinase from Pseudomonas paraeruginosa (strain DSM 24068 / PA7) (Pseudomonas aeruginosa (strain PA7)).